Consider the following 716-residue polypeptide: 1,4-alpha-glucan branching enzyme GlgB (716 aa).

The active-site Nucleophile is the D399. E452 (proton donor) is an active-site residue.

It belongs to the glycosyl hydrolase 13 family. GlgB subfamily. As to quaternary structure, monomer.

The enzyme catalyses Transfers a segment of a (1-&gt;4)-alpha-D-glucan chain to a primary hydroxy group in a similar glucan chain.. The protein operates within glycan biosynthesis; glycogen biosynthesis. In terms of biological role, catalyzes the formation of the alpha-1,6-glucosidic linkages in glycogen by scission of a 1,4-alpha-linked oligosaccharide from growing alpha-1,4-glucan chains and the subsequent attachment of the oligosaccharide to the alpha-1,6 position. This Rhodopseudomonas palustris (strain BisB5) protein is 1,4-alpha-glucan branching enzyme GlgB.